Reading from the N-terminus, the 412-residue chain is Protein png-1 (412 aa).

The Zn(2+) site is built by C150, C153, C182, and C185. A disordered region spans residues A363–P412.

The protein belongs to the transglutaminase-like superfamily. PNGase family.

This chain is Protein png-1 (un-7), found in Neurospora crassa (strain ATCC 24698 / 74-OR23-1A / CBS 708.71 / DSM 1257 / FGSC 987).